The sequence spans 131 residues: UPF0292 protein PF1724 (131 aa).

In terms of domain architecture, Toprim spans 20 to 103; it reads KGVIIVEGKR…ETRRELQFIA (84 aa). The Mg(2+) site is built by Glu-26, Asp-69, and Asp-71.

It belongs to the UPF0292 family. The cofactor is Mg(2+).

This is UPF0292 protein PF1724 from Pyrococcus furiosus (strain ATCC 43587 / DSM 3638 / JCM 8422 / Vc1).